We begin with the raw amino-acid sequence, 514 residues long: Maturase K (514 aa).

This sequence belongs to the intron maturase 2 family. MatK subfamily.

The protein localises to the plastid. It is found in the chloroplast. Its function is as follows. Usually encoded in the trnK tRNA gene intron. Probably assists in splicing its own and other chloroplast group II introns. The protein is Maturase K of Acer palmatum (Japanese maple).